A 498-amino-acid chain; its full sequence is MAMVSNVKYFADALQGTQGKVGTFTVLGENVFFKRGDGTDTVCGLEMVAGRILRARSDVHFCEPKYFVEMDDGEKVCSFELLDCKPLGSMAPGRKGKKSVGSVTQYLSGLYQTFAAAAAAHSVGVVHSDLHTGNVMLCPEPVSHYVYNLGGGEMLSLETNGVRAVVVDLGMARIPGKNTVACDIFVHVGHVVNGRPDYAADVRTLTLGSCYDMVMMCASGKPSLEERMLCYEVMAAYNNLFAGVCAPSKGGWFVDHYPSMCAVMEATIPDSVASRGGGSWLLAVANMCKLLVPRPYVKRACGKEKAHAMWMTLFTELGLTAKKSISKVDMVDAVQRLRAIADGSEIPPASLMKAACAVGLLTASVAEACYEKVEEIKASHVGMLRWKDALDAWVRLPVRCSGSVPKLGSTVILHTESGTEETVVTQSMLRQIVKTREALDMAQAASDAVWTDTAYYEADDELMKGAHEESAEDFATSFLKGGTTGPIAKRCRLILKSL.

This Dryophytes versicolor (chameleon treefrog) protein is Putative phosphotransferase 057R.